Consider the following 226-residue polypeptide: V-type proton ATPase subunit E 1 (226 aa).

An N-acetylalanine modification is found at alanine 2. Tyrosine 56 bears the Phosphotyrosine mark.

The protein belongs to the V-ATPase E subunit family. As to quaternary structure, V-ATPase is a heteromultimeric enzyme made up of two complexes: the ATP-hydrolytic V1 complex and the proton translocation V0 complex. The V1 complex consists of three catalytic AB heterodimers that form a heterohexamer, three peripheral stalks each consisting of EG heterodimers, one central rotor including subunits D and F, and the regulatory subunits C and H. The proton translocation complex V0 consists of the proton transport subunit a, a ring of proteolipid subunits c9c'', rotary subunit d, subunits e and f, and the accessory subunits ATP6AP1/Ac45 and ATP6AP2/PRR. Interacts with RABL2/RABL2A; binds preferentially to GTP-bound RABL2. Interacts with ALDOC. Interacts with RAB11B. As to expression, expressed within the midpiece of sperm tail (at protein level). Kidney; localizes to early distal nephron, encompassing thick ascending limbs and distal convoluted tubules (at protein level).

It localises to the apical cell membrane. The protein localises to the cytoplasmic vesicle. The protein resides in the secretory vesicle. Its subcellular location is the synaptic vesicle membrane. It is found in the clathrin-coated vesicle membrane. In terms of biological role, subunit of the V1 complex of vacuolar(H+)-ATPase (V-ATPase), a multisubunit enzyme composed of a peripheral complex (V1) that hydrolyzes ATP and a membrane integral complex (V0) that translocates protons. V-ATPase is responsible for acidifying and maintaining the pH of intracellular compartments and in some cell types, is targeted to the plasma membrane, where it is responsible for acidifying the extracellular environment. The protein is V-type proton ATPase subunit E 1 (Atp6v1e1) of Mus musculus (Mouse).